A 451-amino-acid polypeptide reads, in one-letter code: Phosphoglucosamine mutase (451 aa).

Serine 101 acts as the Phosphoserine intermediate in catalysis. The Mg(2+) site is built by serine 101, aspartate 242, aspartate 244, and aspartate 246. Position 101 is a phosphoserine (serine 101).

Belongs to the phosphohexose mutase family. The cofactor is Mg(2+). In terms of processing, activated by phosphorylation.

It carries out the reaction alpha-D-glucosamine 1-phosphate = D-glucosamine 6-phosphate. Catalyzes the conversion of glucosamine-6-phosphate to glucosamine-1-phosphate. This Beijerinckia indica subsp. indica (strain ATCC 9039 / DSM 1715 / NCIMB 8712) protein is Phosphoglucosamine mutase.